The chain runs to 367 residues: Pre-small/secreted glycoprotein (367 aa).

Positions 1–33 are cleaved as a signal peptide; the sequence is MGSGYQLLQLPRERFRKTSFLVWVIILFQRAIS. The N-linked (GlcNAc...) asparagine; by host glycan is linked to asparagine 41. Disulfide bonds link cysteine 109–cysteine 136 and cysteine 122–cysteine 148. N-linked (GlcNAc...) asparagine; by host glycans are attached at residues asparagine 205, asparagine 229, asparagine 239, asparagine 258, and asparagine 269.

It belongs to the filoviruses glycoprotein family. In terms of assembly, homodimer; disulfide-linked. The homodimers are linked by two disulfide bonds in a parallel orientation. As to quaternary structure, monomer. In terms of processing, this precursor is processed into mature sGP and delta-peptide by host furin or furin-like proteases. The cleavage site corresponds to the furin optimal cleavage sequence [KR]-X-[KR]-R. N-glycosylated. Post-translationally, O-glycosylated.

Its subcellular location is the secreted. In terms of biological role, seems to possess an anti-inflammatory activity as it can reverse the barrier-decreasing effects of TNF alpha. Might therefore contribute to the lack of inflammatory reaction seen during infection in spite the of extensive necrosis and massive virus production. Does not seem to be involved in activation of primary macrophages. Does not seem to interact specifically with neutrophils. Viroporin that permeabilizes mammalian cell plasma membranes. It acts by altering permeation of ionic compounds and small molecules. This activity may lead to viral enterotoxic activity. The chain is Pre-small/secreted glycoprotein (GP) from Epomops franqueti (Franquet's epauletted fruit bat).